Consider the following 516-residue polypeptide: Squalene epoxidase 5 (516 aa).

2 helical membrane-spanning segments follow: residues 3-23 (FTNV…VFYV) and 45-65 (ATDV…YALA). Residues 55–56 (VG), 75–76 (ER), arginine 83, phenylalanine 88, arginine 156, valine 172, aspartate 335, and methionine 348 each bind FAD. Residues 446 to 466 (LIYHLCAITLSSIGHLLSPFP) traverse the membrane as a helical segment.

This sequence belongs to the squalene monooxygenase family. FAD serves as cofactor. In terms of tissue distribution, expressed in seedlings, leaves, stems and inflorescences. Detected in siliques.

It localises to the membrane. It catalyses the reaction squalene + reduced [NADPH--hemoprotein reductase] + O2 = (S)-2,3-epoxysqualene + oxidized [NADPH--hemoprotein reductase] + H2O + H(+). Its pathway is terpene metabolism; lanosterol biosynthesis; lanosterol from farnesyl diphosphate: step 2/3. Its function is as follows. Catalyzes the stereospecific oxidation of squalene to (S)-2,3-epoxysqualene, and is considered to be a rate-limiting enzyme in steroid biosynthesis. The sequence is that of Squalene epoxidase 5 (SQE5) from Arabidopsis thaliana (Mouse-ear cress).